Consider the following 428-residue polypeptide: MTQVFQKVSAIRGMNDVLPGPSARWEKFEEIVRGWLRSYGYRNVRTPVLEHTRLFARGIGEVTDIVEKEMYTFTDALNGDSLTMRPEMTAGIVRASIEHNMLYDRPHRVYAIGPVFRHERPQRGRYRQFHQIDVEALGFAGPDVDAEMIVMLARLWKLLGLQDVRLELNSLGQPAERAAHRAALIEHLERHQDVLDEDGRRRMYSNPLRVLDTKNPAMQEMADSAPRLFDFLGEASRSHFDGLCQRLADAGIEYRLNPRLVRGLDYYNLTVFEWVTDRLGAQGTVCGGGRYDGLVELLGGKPTPAVGFAIGMERLLDLWEQSVEIEQPAECEVYIVHQGEEGQRLAARVGEQLRDAGLDVIVHAGAAGFKAQFKRADASGARIAVILGGDEVASRTASIKHLRGPVGADAAQQQVPLAQLADVLKSKG.

It belongs to the class-II aminoacyl-tRNA synthetase family. In terms of assembly, homodimer.

The protein localises to the cytoplasm. It catalyses the reaction tRNA(His) + L-histidine + ATP = L-histidyl-tRNA(His) + AMP + diphosphate + H(+). This is Histidine--tRNA ligase from Bordetella pertussis (strain Tohama I / ATCC BAA-589 / NCTC 13251).